A 543-amino-acid chain; its full sequence is CTP synthase (543 aa).

The tract at residues 1-265 (MARYIFITGG…DDEVLAAFGI (265 aa)) is amidoligase domain. Ser13 serves as a coordination point for CTP. Ser13 serves as a coordination point for UTP. 14 to 19 (SLGKGL) contributes to the ATP binding site. L-glutamine is bound at residue Tyr54. Asp71 contributes to the ATP binding site. Mg(2+) is bound by residues Asp71 and Glu139. Residues 146–148 (DIE), 186–191 (KTKPTQ), and Lys222 each bind CTP. UTP-binding positions include 186 to 191 (KTKPTQ) and Lys222. 238–240 (RDV) contributes to the ATP binding site. The region spanning 291-542 (TIAIVGKYTG…IQAAMVQSRL (252 aa)) is the Glutamine amidotransferase type-1 domain. An L-glutamine-binding site is contributed by Gly353. Cys380 (nucleophile; for glutamine hydrolysis) is an active-site residue. Residues 381-384 (FGMQ), Glu404, and Arg470 each bind L-glutamine. Active-site residues include His515 and Glu517.

The protein belongs to the CTP synthase family. As to quaternary structure, homotetramer.

The catalysed reaction is UTP + L-glutamine + ATP + H2O = CTP + L-glutamate + ADP + phosphate + 2 H(+). The enzyme catalyses L-glutamine + H2O = L-glutamate + NH4(+). It carries out the reaction UTP + NH4(+) + ATP = CTP + ADP + phosphate + 2 H(+). It functions in the pathway pyrimidine metabolism; CTP biosynthesis via de novo pathway; CTP from UDP: step 2/2. With respect to regulation, allosterically activated by GTP, when glutamine is the substrate; GTP has no effect on the reaction when ammonia is the substrate. The allosteric effector GTP functions by stabilizing the protein conformation that binds the tetrahedral intermediate(s) formed during glutamine hydrolysis. Inhibited by the product CTP, via allosteric rather than competitive inhibition. Catalyzes the ATP-dependent amination of UTP to CTP with either L-glutamine or ammonia as the source of nitrogen. Regulates intracellular CTP levels through interactions with the four ribonucleotide triphosphates. The sequence is that of CTP synthase from Bradyrhizobium diazoefficiens (strain JCM 10833 / BCRC 13528 / IAM 13628 / NBRC 14792 / USDA 110).